Reading from the N-terminus, the 925-residue chain is Protein translocase subunit SecA (925 aa).

Residues Gln-87, 105–109, and Asp-512 contribute to the ATP site; that span reads GEGKT. Cys-910, Cys-912, Cys-921, and His-922 together coordinate Zn(2+).

The protein belongs to the SecA family. As to quaternary structure, monomer and homodimer. Part of the essential Sec protein translocation apparatus which comprises SecA, SecYEG and auxiliary proteins SecDF-YajC and YidC. Requires Zn(2+) as cofactor.

It is found in the cell inner membrane. The protein localises to the cytoplasm. It catalyses the reaction ATP + H2O + cellular proteinSide 1 = ADP + phosphate + cellular proteinSide 2.. In terms of biological role, part of the Sec protein translocase complex. Interacts with the SecYEG preprotein conducting channel. Has a central role in coupling the hydrolysis of ATP to the transfer of proteins into and across the cell membrane, serving both as a receptor for the preprotein-SecB complex and as an ATP-driven molecular motor driving the stepwise translocation of polypeptide chains across the membrane. This chain is Protein translocase subunit SecA, found in Psychrobacter sp. (strain PRwf-1).